Consider the following 742-residue polypeptide: Two pore calcium channel protein 1 (742 aa).

Positions 1–44 are disordered; the sequence is MSEAQAPLITEEAAERGLASSGSRRLSDGGGGQGSRKYRRRSDA. Topologically, residues 1–82 are cytoplasmic; that stretch reads MSEAQAPLIT…NDTRFGRAMS (82 aa). Residues 83-103 traverse the membrane as a helical segment; the sequence is FYFVYLRLDWLWSLNIFALIL. Residues 104-140 lie on the Extracellular side of the membrane; sequence LNFLEKPLWCRKDALHACDQRDMYFLGQLPYFSKTES. Residues 141-161 traverse the membrane as a helical segment; sequence LIYEGLTLVILVMEILCPLSY. The Cytoplasmic portion of the chain corresponds to 162–176; the sequence is EGLNIFWRSTTNKLK. A helical transmembrane segment spans residues 177 to 197; sequence ILLLFILACDILVFAFSSQPF. Residues 198-204 are Extracellular-facing; that stretch reads RLAPYIR. The helical; Voltage-sensor transmembrane segment at 205–226 threads the bilayer; that stretch reads VVFLIMTIRELRMCAITLAGLI. Residues 227–247 form a helical membrane-spanning segment; sequence GTYLNVLALSLLFLLFASWLA. The Extracellular portion of the chain corresponds to 248 to 258; it reads YVTFEDTPQGK. The segment at residues 259-273 is an intramembrane region (pore-forming); the sequence is TIFSSYGVTLYQMFV. Residues 274–296 lie on the Extracellular side of the membrane; the sequence is LFTTSNNPDVWVPAYKISRWYSL. Residues 297 to 317 traverse the membrane as a helical segment; that stretch reads FFIVYVLLGVYFLTNLILAVI. The Cytoplasmic segment spans residues 318 to 446; sequence YDSFKEQFAK…SFVRSRTFEY (129 aa). 2 consecutive EF-hand domains span residues 335–370 and 376–411; these read IRKNILQKAFELIDTNTRGYLDREQCISLLNELNKY and TSREDFELIFAELDRSGDFKVTSEEFADLCNTIAIK. The chain crosses the membrane as a helical span at residues 447–467; sequence IIVFVLLINLVAVIIETTLDI. Over 468 to 480 the chain is Extracellular; sequence ENSSSQETWQEVE. A glycan (N-linked (GlcNAc...) asparagine) is linked at Asn-469. Residues 481 to 501 form a helical membrane-spanning segment; the sequence is FFLGWIYVAEMALKIFSLGFG. Over 502-510 the chain is Cytoplasmic; the sequence is AYWMEGQNK. Residues 511 to 531 form a helical membrane-spanning segment; that stretch reads FDFVLTWTIFIGETLTFAFPS. The Extracellular segment spans residues 532-540; sequence KLPFLSNGE. The helical; Voltage-sensor transmembrane segment at 541-558 threads the bilayer; the sequence is WIRYLLLGRVLRLTRILL. Residues 559–582 are Cytoplasmic-facing; it reads QVQRFRVFVATFFTLMSSLMPYLG. The helical transmembrane segment at 583–603 threads the bilayer; the sequence is IVFCILCMYCSLGLQIFGGIV. Over 604 to 627 the chain is Extracellular; it reads YAGNPTLEETDLFSNDYLLFNFND. The pore-forming intramembrane region spans 628-642; that stretch reads YPSGMVTLFNLLVMG. Over 643–663 the chain is Extracellular; the sequence is NWQVWMESYWQLTGSSWSLIY. Residues 664 to 684 traverse the membrane as a helical segment; it reads FVSFYLISILLLLNLIVAFVL. At 685-742 the chain is on the cytoplasmic side; that stretch reads EAFFAEMELEKGEEVDIQSPTSGGIKKRRSMRVRSKGTMVDILLHHMLSNELDGSQNS.

This sequence belongs to the calcium channel alpha-1 subunit (TC 1.A.1.11) family. Two pore calcium channel subfamily. As to quaternary structure, homodimer.

The protein resides in the membrane. With respect to regulation, inhibited by Al(3+). In terms of biological role, functions as a voltage-gated inward-rectifying Ca(2+) channel (VDCC) across the plasma membrane that mediates sucrose-induced Ca(2+) influx in autotrophically grown leaf cells. Acts as the major ROS-responsive Ca(2+) channel and is the possible target of Al-dependent inhibition. Plays a regulatory role in defense responses. This is Two pore calcium channel protein 1 (TPC1) from Hordeum vulgare (Barley).